Reading from the N-terminus, the 259-residue chain is Protein N-terminal and lysine N-methyltransferase efm7 (259 aa).

Residues Trp-56, 83–85 (GAA), Asp-105, Trp-139, and Ala-163 contribute to the S-adenosyl-L-methionine site.

Belongs to the class I-like SAM-binding methyltransferase superfamily. EFM7 family.

It localises to the cytoplasm. In terms of biological role, S-adenosyl-L-methionine-dependent protein methyltransferase that trimethylates the N-terminal glycine 'Gly-2' of elongation factor 1-alpha, before also catalyzing the mono- and dimethylation of 'Lys-3'. The protein is Protein N-terminal and lysine N-methyltransferase efm7 of Aspergillus fumigatus (strain ATCC MYA-4609 / CBS 101355 / FGSC A1100 / Af293) (Neosartorya fumigata).